The following is an 827-amino-acid chain: Penicillin-binding protein 1A (827 aa).

Residues 1–18 (MGKKKKKRKSSAFKIILN) lie on the Cytoplasmic side of the membrane. Residues 19 to 39 (VFLSIFLVAGVAFGGIVFAMI) form a helical; Signal-anchor for type II membrane protein membrane-spanning segment. Topologically, residues 40–827 (KTAPPLNVQQ…QNHEDNKNKQ (788 aa)) are extracellular. The interval 57 to 229 (SILYDDKGQY…PSVYYPYSSA (173 aa)) is transglycosylase. The active-site Proton donor; for transglycosylase activity is glutamate 96. A transpeptidase region spans residues 357-641 (ASAVIMDYHN…AARLWGDIMK (285 aa)). Serine 398 serves as the catalytic Acyl-ester intermediate; for transpeptidase activity. Residues 755–827 (GSLPPTEEKN…QNHEDNKNKQ (73 aa)) form a disordered region. Over residues 760 to 790 (TEEKNNSNTRDKNKDKNKDKDKNKNKDKNPS) the composition is skewed to basic and acidic residues. Residues 791–817 (QDKPNNNNNNNNNDNNNNTKPPENDSN) are compositionally biased toward low complexity. Residues 818–827 (QNHEDNKNKQ) show a composition bias toward basic and acidic residues.

This sequence in the N-terminal section; belongs to the glycosyltransferase 51 family. It in the C-terminal section; belongs to the transpeptidase family.

The protein resides in the cell membrane. It carries out the reaction [GlcNAc-(1-&gt;4)-Mur2Ac(oyl-L-Ala-gamma-D-Glu-L-Lys-D-Ala-D-Ala)](n)-di-trans,octa-cis-undecaprenyl diphosphate + beta-D-GlcNAc-(1-&gt;4)-Mur2Ac(oyl-L-Ala-gamma-D-Glu-L-Lys-D-Ala-D-Ala)-di-trans,octa-cis-undecaprenyl diphosphate = [GlcNAc-(1-&gt;4)-Mur2Ac(oyl-L-Ala-gamma-D-Glu-L-Lys-D-Ala-D-Ala)](n+1)-di-trans,octa-cis-undecaprenyl diphosphate + di-trans,octa-cis-undecaprenyl diphosphate + H(+). It catalyses the reaction Preferential cleavage: (Ac)2-L-Lys-D-Ala-|-D-Ala. Also transpeptidation of peptidyl-alanyl moieties that are N-acyl substituents of D-alanine.. The protein operates within cell wall biogenesis; peptidoglycan biosynthesis. Cell wall formation. Synthesis of cross-linked peptidoglycan from the lipid intermediates. The enzyme has a penicillin-insensitive transglycosylase N-terminal domain (formation of linear glycan strands) and a penicillin-sensitive transpeptidase C-terminal domain (cross-linking of the peptide subunits). This is Penicillin-binding protein 1A (pbpA) from Clostridium botulinum (strain Langeland / NCTC 10281 / Type F).